A 128-amino-acid chain; its full sequence is Flagellar basal body rod protein FlgB (128 aa).

The protein belongs to the flagella basal body rod proteins family. As to quaternary structure, the basal body constitutes a major portion of the flagellar organelle and consists of a number of rings mounted on a central rod. In Gram-negative bacteria, at least four rings, L, P, S and M are present, whereas Gram-positive bacteria lack the L and P rings. The rod consists of about 26 subunits of FlgG in the distal portion, and FlgB, FlgC and FlgF build up the proximal portion of the rod with about 6 subunits each. Rod assembly occurs by export via the flagellum-specific pathway of its constituent proteins and by their incorporation into the rod structure in the probable order of FlgB, FlgC, FlgF and FlgG. Another protein, FliE, also assembles onto the stable rod structure.

It localises to the bacterial flagellum basal body. In terms of biological role, structural component of flagellum, the bacterial motility apparatus. Part of the rod structure of flagellar basal body. This chain is Flagellar basal body rod protein FlgB, found in Cereibacter sphaeroides (Rhodobacter sphaeroides).